A 289-amino-acid chain; its full sequence is Phospholipase A1 (289 aa).

The first 20 residues, 1–20 (MRTLQGWLLPVFMLPMAVYA), serve as a signal peptide directing secretion. The Periplasmic portion of the chain corresponds to 21-52 (QEATVKEVHDAPAVRGSIIANMLQEHDNPFTL). A beta stranded membrane pass occupies residues 53–65 (YPYDTNYLIYTQT). Over 66 to 84 (SDLNKEAIASYDWAENARK) the chain is Extracellular. Residues 85–99 (DEVKFQLSLAFPLWR) form a beta stranded membrane-spanning segment. The Periplasmic segment spans residues 100-105 (GILGPN). The beta stranded transmembrane segment at 106-118 (SVLGASYTQKSWW) threads the bilayer. The Extracellular portion of the chain corresponds to 119–128 (QLSNSEESSP). Ser126 provides a ligand contact to Ca(2+). Residues 129–148 (FRETNYEPQLFLGFATDYRF) traverse the membrane as a beta stranded segment. Residues 149-150 (AG) are Periplasmic-facing. Residues 151-164 (WTLRDVEMGYNHDS) form a beta stranded membrane-spanning segment. Catalysis depends on His162, which acts as the Proton acceptor. Ser164 acts as the Nucleophile in catalysis. Over 165–173 (NGRSDPTSR) the chain is Extracellular. 2 residues coordinate Ca(2+): Arg167 and Ser172. A beta stranded membrane pass occupies residues 174-186 (SWNRLYTRLMAEN). The Periplasmic segment spans residues 187–188 (GN). A beta stranded membrane pass occupies residues 189–198 (WLVEVKPWYV). Over 199-216 (VGNTDDNPDITKYMGYYQ) the chain is Extracellular. Position 204 (Asp204) interacts with Ca(2+). A beta stranded transmembrane segment spans residues 217–223 (LKIGYHL). Topologically, residues 224–225 (GD) are periplasmic. A beta stranded transmembrane segment spans residues 226 to 234 (AVLSAKGQY). Residues 235-241 (NWNTGYG) are Extracellular-facing. The beta stranded transmembrane segment at 242–250 (GAELGLSYP) threads the bilayer. Residues 251 to 255 (ITKHV) lie on the Periplasmic side of the membrane. The beta stranded transmembrane segment at 256 to 265 (RLYTQVYSGY) threads the bilayer. Over 266 to 274 (GESLIDYNF) the chain is Extracellular. The beta stranded transmembrane segment at 275-286 (NQTRVGVGVMLN) threads the bilayer. Residues 287–289 (DLF) are Periplasmic-facing.

It belongs to the phospholipase A1 family. In terms of assembly, homodimer; dimerization is reversible, and the dimeric form is the active one. It depends on Ca(2+) as a cofactor.

Its subcellular location is the cell outer membrane. It catalyses the reaction a 1,2-diacyl-sn-glycero-3-phosphocholine + H2O = a 2-acyl-sn-glycero-3-phosphocholine + a fatty acid + H(+). The enzyme catalyses a 1,2-diacyl-sn-glycero-3-phosphocholine + H2O = a 1-acyl-sn-glycero-3-phosphocholine + a fatty acid + H(+). Hydrolysis of phosphatidylcholine with phospholipase A2 (EC 3.1.1.4) and phospholipase A1 (EC 3.1.1.32) activities. This is Phospholipase A1 (pldA) from Escherichia coli O157:H7.